Consider the following 377-residue polypeptide: Protein ECM9 (377 aa).

May be involved in cell wall organization and biogenesis. This is Protein ECM9 (ECM9) from Saccharomyces cerevisiae (strain ATCC 204508 / S288c) (Baker's yeast).